A 169-amino-acid polypeptide reads, in one-letter code: EP300-interacting inhibitor of differentiation 1 (169 aa).

A disordered region spans residues 31–50; that stretch reads GRGARGPAPEEGPMEEEAGP. The segment at 54–120 is interaction with NR0B2; the sequence is RAQRGLFPEA…AGDALDGGFQ (67 aa). Residues 150–154 carry the LXCXE motif motif; it reads LGCDE.

As to quaternary structure, interacts via its LXCXE motif with the entire pocket region of RB1. Interacts with EP300, NR0B2 and TRIM27. As to expression, expressed in all adult tissues examined and during embryogenesis.

Its subcellular location is the nucleus. The protein localises to the cytoplasm. Interacts with RB1 and EP300 and acts as a repressor of MYOD1 transactivation. Inhibits EP300 and CBP histone acetyltransferase activity. May be involved in coupling cell cycle exit to the transcriptional activation of genes required for cellular differentiation. May act as a candidate coinhibitory factor for NR0B2 that can be directly linked to transcription inhibitory mechanisms. The chain is EP300-interacting inhibitor of differentiation 1 from Mus musculus (Mouse).